The following is a 205-amino-acid chain: Protease (205 aa).

Residues histidine 54, aspartate 71, and cysteine 120 contribute to the active site.

Belongs to the peptidase C5 family. Interacts with protease cofactor pVI-C; this interaction is necessary for protease activation.

The protein localises to the virion. Its subcellular location is the host nucleus. It carries out the reaction Cleaves proteins of the adenovirus and its host cell at two consensus sites: -Yaa-Xaa-Gly-Gly-|-Xaa- and -Yaa-Xaa-Gly-Xaa-|-Gly- (in which Yaa is Met, Ile or Leu, and Xaa is any amino acid).. Requires DNA and protease cofactor for maximal activation. Inside nascent virions, becomes partially activated by binding to the viral DNA, allowing it to cleave the cofactor that binds to the protease and fully activates it. Actin, like the viral protease cofactor, seems to act as a cofactor in the cleavage of cytokeratin 18 and of actin itself. In terms of biological role, cleaves viral precursor proteins (pTP, pIIIa, pVI, pVII, pVIII, and pX) inside newly assembled particles giving rise to mature virions. Protease complexed to its cofactor slides along the viral DNA to specifically locate and cleave the viral precursors. Mature virions have a weakened organization compared to the unmature virions, thereby facilitating subsequent uncoating. Without maturation, the particle lacks infectivity and is unable to uncoat. Late in adenovirus infection, in the cytoplasm, may participate in the cytoskeleton destruction. Cleaves host cell cytoskeletal keratins K7 and K18. In Bos taurus (Bovine), this protein is Protease.